The primary structure comprises 346 residues: Methylthioribose-1-phosphate isomerase (346 aa).

Substrate is bound by residues 46–48 (RGA), Arg89, and Gln196. Asp237 serves as the catalytic Proton donor. 247–248 (NK) contributes to the substrate binding site.

Belongs to the eIF-2B alpha/beta/delta subunits family. MtnA subfamily.

The catalysed reaction is 5-(methylsulfanyl)-alpha-D-ribose 1-phosphate = 5-(methylsulfanyl)-D-ribulose 1-phosphate. It functions in the pathway amino-acid biosynthesis; L-methionine biosynthesis via salvage pathway; L-methionine from S-methyl-5-thio-alpha-D-ribose 1-phosphate: step 1/6. Its function is as follows. Catalyzes the interconversion of methylthioribose-1-phosphate (MTR-1-P) into methylthioribulose-1-phosphate (MTRu-1-P). In Geobacter sp. (strain M21), this protein is Methylthioribose-1-phosphate isomerase.